A 331-amino-acid chain; its full sequence is Anthranilate phosphoribosyltransferase (331 aa).

5-phospho-alpha-D-ribose 1-diphosphate is bound by residues Gly81, 84–85 (GD), Ser89, 91–94 (NCST), 109–117 (KHGNRAVSS), and Ser121. Gly81 is a binding site for anthranilate. Ser93 provides a ligand contact to Mg(2+). Asn112 contacts anthranilate. Arg167 serves as a coordination point for anthranilate. Residues Asp226 and Glu227 each contribute to the Mg(2+) site.

The protein belongs to the anthranilate phosphoribosyltransferase family. As to quaternary structure, homodimer. It depends on Mg(2+) as a cofactor.

The catalysed reaction is N-(5-phospho-beta-D-ribosyl)anthranilate + diphosphate = 5-phospho-alpha-D-ribose 1-diphosphate + anthranilate. It participates in amino-acid biosynthesis; L-tryptophan biosynthesis; L-tryptophan from chorismate: step 2/5. Catalyzes the transfer of the phosphoribosyl group of 5-phosphorylribose-1-pyrophosphate (PRPP) to anthranilate to yield N-(5'-phosphoribosyl)-anthranilate (PRA). In Oleidesulfovibrio alaskensis (strain ATCC BAA-1058 / DSM 17464 / G20) (Desulfovibrio alaskensis), this protein is Anthranilate phosphoribosyltransferase.